Reading from the N-terminus, the 375-residue chain is LIM domain-binding protein 1 (375 aa).

Disordered regions lie at residues 248 to 294 (PPAE…TFAL) and 331 to 375 (DAAN…QASQ). The span at 266-282 (SGGSTMSSGGGNTNNSN) shows a compositional bias: low complexity. In terms of domain architecture, LIM interaction domain (LID) spans 300–339 (DVMVVGEPTLMGGEFGDEDERLITRLENTQFDAANGIDDE).

This sequence belongs to the LDB family. In terms of assembly, forms homodimers and heterodimers. Interacts with the LIM domain of LIM/homeobox factor lhx1/lim1, and with lhx3/lim3 and lhx5/lim5. Activates lhx1/lim1 by binding. The stoichiometry of lhx1/lim1 and ldb1 is important for their function and an excess of ldb1 can inhibit lhx1/lim1 function. When bound to lhx1/lim1, escapes degradation by rnf12. The N-terminus interacts with the N-terminal region of rnf12. Undergoes rnf12-mediated ubiquitin-proteasome-dependent degradation. As to expression, ubiquitously expressed in the early gastrula before localizing to the dorsal region of the vegetal hemisphere, which contains the Spemann organizer. Expressed in the CNS, pronephros and tail bud in neurula and tail-bud stage embryos. Expressed in multiple adult tissues including brain, heart, lung, stomach, intestine, liver, spleen, kidney, ovary, muscle and skin.

The protein resides in the nucleus. Binds to the LIM domain of a wide variety of LIM domain-containing transcription factors. Acts as a coactivator together with otx2 to stimulate lhx1/lim1-mediated activation of the gsc promoter in the Spemann organizer. Acts synergistically with lhx1/lim1 and ssbp in axis formation. This Xenopus laevis (African clawed frog) protein is LIM domain-binding protein 1 (ldb1).